The sequence spans 218 residues: UPF0319 protein swp_2242 (218 aa).

The N-terminal stretch at Met1–Ala21 is a signal peptide.

It belongs to the UPF0319 family.

In Shewanella piezotolerans (strain WP3 / JCM 13877), this protein is UPF0319 protein swp_2242.